Consider the following 442-residue polypeptide: Trigger factor (442 aa).

One can recognise a PPIase FKBP-type domain in the interval 176-259 (GDFISLSLYV…VNAVIEISSP (84 aa)).

It belongs to the FKBP-type PPIase family. Tig subfamily.

The protein localises to the cytoplasm. The enzyme catalyses [protein]-peptidylproline (omega=180) = [protein]-peptidylproline (omega=0). Functionally, involved in protein export. Acts as a chaperone by maintaining the newly synthesized protein in an open conformation. Functions as a peptidyl-prolyl cis-trans isomerase. The chain is Trigger factor from Chlamydia trachomatis serovar L2 (strain ATCC VR-902B / DSM 19102 / 434/Bu).